The chain runs to 350 residues: MDYKSGLIPDGNAMENLEKQLICPICLEMFTKPVVILPCQHNLCRKCANDIFQAANPYWTNRGGSVSMSGGRFRCPSCRHEVIMDRHGVYGLQRNLLVENIIDIYKQECSSRPLQKGSHPMCKEHEDEKINIYCLTCEVPTCSLCKVFGAHQACEVAPLQSIFQGQKTELSNCISMLVAGNDRVQTIISQLVDSCRVTKENSHQVKEELSQKFDTLYAILDEKKSELLQRITQEQEEKLGFIEALILQYREQLEKSTKLVETAIQSLDEPGGATFLSSAKQLIKSNVEASKGCQLGKTEQGFENMDYFTLDLEHIAEALRAIDFGTDEEEEEFTEEEADEEEGVTTEGHQ.

An RING-type zinc finger spans residues 23–79 (CPICLEMFTKPVVILPCQHNLCRKCANDIFQAANPYWTNRGGSVSMSGGRFRCPSCR). The tract at residues 74–218 (RCPSCRHEVI…LSQKFDTLYA (145 aa)) is interaction with TTN. A B box-type zinc finger spans residues 117 to 159 (GSHPMCKEHEDEKINIYCLTCEVPTCSLCKVFGAHQACEVAPL). The Zn(2+) site is built by Cys122, His125, Cys145, and His151. Positions 207 to 269 (EELSQKFDTL…VETAIQSLDE (63 aa)) form a coiled coil. The 59-residue stretch at 267–325 (LDEPGGATFLSSAKQLIKSNVEASKGCQLGKTEQGFENMDYFTLDLEHIAEALRAIDFG) folds into the COS domain. The span at 325 to 344 (GTDEEEEEFTEEEADEEEGV) shows a compositional bias: acidic residues. The tract at residues 325–350 (GTDEEEEEFTEEEADEEEGVTTEGHQ) is disordered.

In terms of assembly, homodimer. Homooligomer and heterooligomer. Interacts with SUMO2, titin/TTN and GMEB1. Interacts with TRIM54 and probably with TRIM55. Interacts with TNNI3. Forms a ternary complex with RACK1 and PRKCE. Interacts with CKM.

Its subcellular location is the cytoplasm. It localises to the nucleus. It is found in the myofibril. The protein localises to the sarcomere. The protein resides in the m line. Its subcellular location is the z line. It catalyses the reaction S-ubiquitinyl-[E2 ubiquitin-conjugating enzyme]-L-cysteine + [acceptor protein]-L-lysine = [E2 ubiquitin-conjugating enzyme]-L-cysteine + N(6)-ubiquitinyl-[acceptor protein]-L-lysine.. Its pathway is protein modification; protein ubiquitination. E3 ubiquitin ligase. Mediates the ubiquitination and subsequent proteasomal degradation of CKM, GMEB1 and HIBADH. Regulates the proteasomal degradation of muscle proteins under amino acid starvation, where muscle protein is catabolized to provide other organs with amino acids. Inhibits de novo skeletal muscle protein synthesis under amino acid starvation. Regulates proteasomal degradation of cardiac troponin I/TNNI3 and probably of other sarcomeric-associated proteins. May play a role in striated muscle atrophy and hypertrophy by regulating an anti-hypertrophic PKC-mediated signaling pathway. May regulate the organization of myofibrils through TTN in muscle cells. The protein is E3 ubiquitin-protein ligase TRIM63 (Trim63) of Mus musculus (Mouse).